The following is a 466-amino-acid chain: Adenosylhomocysteinase (466 aa).

Substrate contacts are provided by T57, D132, and E192. 193–195 (TTT) provides a ligand contact to NAD(+). Substrate contacts are provided by K222 and D226. NAD(+) contacts are provided by residues N227, 256-261 (GYGDVG), E279, N314, 335-337 (IGH), and N380.

It belongs to the adenosylhomocysteinase family. NAD(+) serves as cofactor.

The protein resides in the cytoplasm. The catalysed reaction is S-adenosyl-L-homocysteine + H2O = L-homocysteine + adenosine. It functions in the pathway amino-acid biosynthesis; L-homocysteine biosynthesis; L-homocysteine from S-adenosyl-L-homocysteine: step 1/1. May play a key role in the regulation of the intracellular concentration of adenosylhomocysteine. The polypeptide is Adenosylhomocysteinase (Rhizobium etli (strain CIAT 652)).